The following is a 231-amino-acid chain: Sensory transduction protein BceR (231 aa).

The region spanning 3–116 (KLLLIEDDES…VLIAKIQAMF (114 aa)) is the Response regulatory domain. A 4-aspartylphosphate modification is found at Asp52. The segment at residues 127–225 (STIKTWCGAA…KVGQGYIAKE (99 aa)) is a DNA-binding region (ompR/PhoB-type).

Phosphorylated by BceS.

The protein resides in the cytoplasm. Its function is as follows. Member of the two-component regulatory system BceS/BceR involved in the regulation of bacitracin resistance. When activated by BceS, binds to the upstream region of the bceAB promoter and up-regulates the expression of these two genes. This is Sensory transduction protein BceR (bceR) from Bacillus subtilis (strain 168).